The primary structure comprises 362 residues: Peptide chain release factor 1 (362 aa).

The residue at position 237 (Gln237) is an N5-methylglutamine.

This sequence belongs to the prokaryotic/mitochondrial release factor family. In terms of processing, methylated by PrmC. Methylation increases the termination efficiency of RF1.

It localises to the cytoplasm. Its function is as follows. Peptide chain release factor 1 directs the termination of translation in response to the peptide chain termination codons UAG and UAA. This is Peptide chain release factor 1 from Vibrio campbellii (strain ATCC BAA-1116).